The primary structure comprises 231 residues: ATP phosphoribosyltransferase (231 aa).

It belongs to the ATP phosphoribosyltransferase family. Short subfamily. In terms of assembly, heteromultimer composed of HisG and HisZ subunits.

Its subcellular location is the cytoplasm. The catalysed reaction is 1-(5-phospho-beta-D-ribosyl)-ATP + diphosphate = 5-phospho-alpha-D-ribose 1-diphosphate + ATP. The protein operates within amino-acid biosynthesis; L-histidine biosynthesis; L-histidine from 5-phospho-alpha-D-ribose 1-diphosphate: step 1/9. In terms of biological role, catalyzes the condensation of ATP and 5-phosphoribose 1-diphosphate to form N'-(5'-phosphoribosyl)-ATP (PR-ATP). Has a crucial role in the pathway because the rate of histidine biosynthesis seems to be controlled primarily by regulation of HisG enzymatic activity. The polypeptide is ATP phosphoribosyltransferase (hisG) (Rhizobium etli (strain ATCC 51251 / DSM 11541 / JCM 21823 / NBRC 15573 / CFN 42)).